Consider the following 677-residue polypeptide: UvrABC system protein B (677 aa).

A Helicase ATP-binding domain is found at 25–412 (DGVNSGREYQ…SGAIIEQVIR (388 aa)). 38–45 (GATGTGKT) contacts ATP. The short motif at 91–114 (YYDYYQPEAYVPVSDTYIAKTSSI) is the Beta-hairpin element. The 163-residue stretch at 429–591 (QVEDLLDEIR…IVPMPAGKKA (163 aa)) folds into the Helicase C-terminal domain. Residues 639 to 674 (PQLIDELETKMKKSAKDLDFENAAKLRDKIHQLRKK) form the UVR domain.

This sequence belongs to the UvrB family. Forms a heterotetramer with UvrA during the search for lesions. Interacts with UvrC in an incision complex.

Its subcellular location is the cytoplasm. Functionally, the UvrABC repair system catalyzes the recognition and processing of DNA lesions. A damage recognition complex composed of 2 UvrA and 2 UvrB subunits scans DNA for abnormalities. Upon binding of the UvrA(2)B(2) complex to a putative damaged site, the DNA wraps around one UvrB monomer. DNA wrap is dependent on ATP binding by UvrB and probably causes local melting of the DNA helix, facilitating insertion of UvrB beta-hairpin between the DNA strands. Then UvrB probes one DNA strand for the presence of a lesion. If a lesion is found the UvrA subunits dissociate and the UvrB-DNA preincision complex is formed. This complex is subsequently bound by UvrC and the second UvrB is released. If no lesion is found, the DNA wraps around the other UvrB subunit that will check the other stand for damage. This is UvrABC system protein B from Prochlorococcus marinus (strain SARG / CCMP1375 / SS120).